The following is a 277-amino-acid chain: MGIKVYKPTTNGRRNMTSLDFAEITTSTPEKSLLVSLKNKAGRNNNGRITVRHQGGGHKRHYRLIDFKRNKDGVEAVVKTIEYDPNRTANIALVHYTDGVKAYIIAPKGLEVGQRIVSGPDADIKVGNALPLANIPVGTVIHNIELKPGKGAELVRAAGASAQVLGQEGKYVLVRLQSGEVRMILGTCRATIGTVGNEQQSLINLGKAGRNRWKGVRPTVRGSVMNPNDHPHGGGEGKAPVGRKAPSTPWGKPALGLKTRNKKAKSDKLIVRRRNEK.

The tract at residues glycine 222 to lysine 277 is disordered. A compositionally biased stretch (basic and acidic residues) spans alanine 264 to lysine 277.

Belongs to the universal ribosomal protein uL2 family. In terms of assembly, part of the 50S ribosomal subunit. Forms a bridge to the 30S subunit in the 70S ribosome.

In terms of biological role, one of the primary rRNA binding proteins. Required for association of the 30S and 50S subunits to form the 70S ribosome, for tRNA binding and peptide bond formation. It has been suggested to have peptidyltransferase activity; this is somewhat controversial. Makes several contacts with the 16S rRNA in the 70S ribosome. The protein is Large ribosomal subunit protein uL2 of Streptococcus thermophilus (strain CNRZ 1066).